We begin with the raw amino-acid sequence, 409 residues long: Protein PHOSPHATE STARVATION RESPONSE 1 (409 aa).

Over residues 1–15 (MEARPVHRSGSRDLT) the composition is skewed to basic and acidic residues. Disordered regions lie at residues 1-42 (MEAR…NSQL), 86-108 (EKQQHYTGSSSNNAVQTPSNNDS), and 178-226 (ETNS…TGKA). Composition is skewed to polar residues over residues 16–26 (RTSSIPSTQKP) and 90–108 (HYTGSSSNNAVQTPSNNDS). Residues 192–224 (QIPQPQIVQQQPSPSVELRPVSTTSSNSNNGTG) show a composition bias toward low complexity. The HTH myb-type domain maps to 222 to 282 (GTGKARMRWT…HLQKYRTARY (61 aa)). Positions 253–278 (PKGVLKIMKVEGLTIYHVKSHLQKYR) form a DNA-binding region, H-T-H motif. The stretch at 314–334 (TEALRLQMEVQKQLHEQLEIQ) forms a coiled coil. The LHEQLE motif lies at 327–332 (LHEQLE). Residues 358–370 (GLTKGTASTSDSA) are compositionally biased toward polar residues. A disordered region spans residues 358–409 (GLTKGTASTSDSAAKSEQEDKKTADSKEVPEEETRKCEELESPQPKRPKIDN). The span at 371 to 396 (AKSEQEDKKTADSKEVPEEETRKCEE) shows a compositional bias: basic and acidic residues. S399 carries the phosphoserine modification.

Belongs to the MYB-CC family. In terms of assembly, homodimers and heterodimers. Interacts with SPX1 in a Pi-dependent manner. Does not interact with PHL2 or PHL3. Sumoylated by SIZ1. Sumoylation controls phosphate deficiency responses.

Its subcellular location is the nucleus. Transcription factor involved in phosphate starvation signaling. Binds as a dimer to P1BS, an imperfect palindromic sequence 5'-GNATATNC-3', to promote the expression of inorganic phosphate (Pi) starvation-responsive genes. SPX1 is a competitive inhibitor of this DNA-binding. PHR1 binding to its targets is low Pi-dependent. Regulates the expression of miR399. Regulates the expression of IPS1 (At3g09922), a non-coding RNA that mimics the target of miR399 to block the cleavage of PHO2 under Pi-deficient conditions. Regulates lipid remodeling and triacylglycerol accumulation during phosphorus starvation. Required for the shoot-specific hypoxic response. Regulates FER1 expression upon phosphate starvation, linking iron and phosphate homeostasis. Contributes to the homeostasis of both sulfate and phosphate in plants under phosphate deficiency. Required for adaptation to high light and retaining functional photosynthesis during phosphate starvation. Involved in the coregulation of Zn and Pi homeostasis. The polypeptide is Protein PHOSPHATE STARVATION RESPONSE 1 (Arabidopsis thaliana (Mouse-ear cress)).